A 277-amino-acid polypeptide reads, in one-letter code: Large ribosomal subunit protein uL2m (277 aa).

Residues alanine 225 to arginine 263 are disordered. Residues threonine 248–threonine 259 are compositionally biased toward polar residues.

The protein belongs to the universal ribosomal protein uL2 family.

It localises to the mitochondrion. The protein is Large ribosomal subunit protein uL2m (RPL2) of Reclinomonas americana.